The primary structure comprises 400 residues: Na(+)/H(+) antiporter NhaA (400 aa).

The next 11 helical transmembrane spans lie at 9–29, 60–80, 96–116, 127–147, 155–175, 180–200, 210–230, 263–283, 294–314, 327–347, and 366–386; these read FLVS…IAMV, LILW…GLEL, VLPA…FYLF, WAIP…ILGA, IFLV…MAIF, LSLI…ALNL, LILG…ATLA, YFVL…GIGL, VILG…FVAI, WISF…SLFI, and VLIA…IASV.

Belongs to the NhaA Na(+)/H(+) (TC 2.A.33) antiporter family.

It localises to the cell inner membrane. It catalyses the reaction Na(+)(in) + 2 H(+)(out) = Na(+)(out) + 2 H(+)(in). In terms of biological role, na(+)/H(+) antiporter that extrudes sodium in exchange for external protons. This is Na(+)/H(+) antiporter NhaA from Campylobacter curvus (strain 525.92).